The following is a 176-amino-acid chain: Sigma intracellular receptor 2 (176 aa).

The Cytoplasmic portion of the chain corresponds to 1-9 (MGAPATRRC). A helical transmembrane segment spans residues 10–30 (VEWLLGLYFLSHIPITLFMDL). One can recognise an EXPERA domain in the interval 10-158 (VEWLLGLYFL…PYLLIPFILL (149 aa)). The Lumenal segment spans residues 31 to 68 (QAVLPRELYPVEFRNLLKWYAKEFKDPLLQEPPAWFKS). A helical transmembrane segment spans residues 69–89 (FLFCELVFQLPFFPIATYAFL). The cholesterol site is built by valine 75 and glutamine 77. At 90-99 (KGSCKWIRTP) the chain is on the cytoplasmic side. A helical transmembrane segment spans residues 100-120 (AIIYSVHTMTTLIPILSTFLF). The segment at 108–176 (MTTLIPILST…YKYEEKRKKK (69 aa)) is required for interaction with Hst1/HTN1. The Lumenal portion of the chain corresponds to 121-140 (EDFSKASGFKGQRPETLHER). Residues 141–161 (LTLVSVYAPYLLIPFILLIFM) form a helical membrane-spanning segment. Residues 162–176 (LRSPYYKYEEKRKKK) are Cytoplasmic-facing. Positions 172–176 (KRKKK) match the ER retention motif motif.

It belongs to the TMEM97/sigma-2 receptor family. In terms of assembly, homodimer. Interacts with NPC1; the interaction impairs NPC1-mediated cholesterol transport. Interacts with PGRMC1 and LDLR; the interaction increases LDL internalization. Interacts with histatin 1/HTN1; the interaction induces HTN1-stimulating wound healing. Interacts with TSPO. Forms a complex with TSPO and PGRMC1; the interaction occurs in MIA PaCa-2 cells but not in MCF7 cells. In terms of tissue distribution, widely expressed in normal tissues. Expressed in pancreatic, renal, breast, colon, ovarian surface epithelial (OSE) cells. Highly expressed in various proliferating cancer cells.

It is found in the rough endoplasmic reticulum membrane. The protein localises to the nucleus membrane. Its function is as follows. Sigma-2 receptor which contributes to ameliorate dysfunctional cellular processes and slow degenerative progression by regulating cell functions including cholesterol biosynthesis/trafficking, membrane trafficking, autophagy, lipid membrane-bound protein trafficking, and receptor stabilization at the cell surface. Forms a ternary complex with PGRMC1 receptor and low density lipoprotein receptor/LDLR at the plasma membrane, which increases LDLR-mediated LDL cholesterol internalization. Decreases lysosomal sterol transporter NPC1 availability to the cell, probably through NPC1-binding, hence controlling lipid transport, including cholesterol and LBPA, outside of late endosome/lysosome. Binds regio- and stereoselective ligand 20(S)-hydroxycholesterol (20(S)-OHC) which enhances TMEM97-NPC1 interaction and decreases TMEM97-PGRMC1 and TMEM97-TSPO interactions, thereby linking OHC binding to cholesterol homeostasis. Also able to bind cholesterol. Binds histatin 1 (Hst 1)/HN1 salivary peptide at the ER membrane, which is critical for increasing mitochondria-ER contacts and stimulating Hst1 wound healing properties. May alter the activity of some cytochrome P450 proteins. Although shows homologies with sterol isomerases (EXPERA domain), not able to catalyze sterol isomerization. However, may act as sensors of these molecules. Acts as a quality control factor in the ER, promoting the proteolytic degradation of nonproductive and extramitochondrial precursor proteins in the ER membrane thus removing them from the ER surface. This chain is Sigma intracellular receptor 2, found in Homo sapiens (Human).